Consider the following 113-residue polypeptide: Large ribosomal subunit protein bL19 (113 aa).

It belongs to the bacterial ribosomal protein bL19 family.

Functionally, this protein is located at the 30S-50S ribosomal subunit interface and may play a role in the structure and function of the aminoacyl-tRNA binding site. In Mycobacterium sp. (strain JLS), this protein is Large ribosomal subunit protein bL19.